Reading from the N-terminus, the 414-residue chain is Tryptophan synthase beta chain (414 aa).

An N6-(pyridoxal phosphate)lysine modification is found at Lys109.

Belongs to the TrpB family. In terms of assembly, tetramer of two alpha and two beta chains. Pyridoxal 5'-phosphate serves as cofactor.

It carries out the reaction (1S,2R)-1-C-(indol-3-yl)glycerol 3-phosphate + L-serine = D-glyceraldehyde 3-phosphate + L-tryptophan + H2O. The protein operates within amino-acid biosynthesis; L-tryptophan biosynthesis; L-tryptophan from chorismate: step 5/5. In terms of biological role, the beta subunit is responsible for the synthesis of L-tryptophan from indole and L-serine. This Prochlorococcus marinus (strain AS9601) protein is Tryptophan synthase beta chain.